The sequence spans 329 residues: Malate dehydrogenase (329 aa).

12–18 is an NAD(+) binding site; that stretch reads GAAGQIG. Arginine 95 and arginine 101 together coordinate substrate. NAD(+) contacts are provided by residues asparagine 108, glutamine 115, and 132-134; that span reads VGN. Asparagine 134 and arginine 165 together coordinate substrate. Residue histidine 190 is the Proton acceptor of the active site.

It belongs to the LDH/MDH superfamily. MDH type 2 family.

It carries out the reaction (S)-malate + NAD(+) = oxaloacetate + NADH + H(+). In terms of biological role, catalyzes the reversible oxidation of malate to oxaloacetate. The protein is Malate dehydrogenase of Bordetella bronchiseptica (strain ATCC BAA-588 / NCTC 13252 / RB50) (Alcaligenes bronchisepticus).